A 120-amino-acid polypeptide reads, in one-letter code: Putative B3 domain-containing protein At3g28853 (120 aa).

Positions 19-120 (INKRLTQSDV…DKSNEVFYII (102 aa)) form a DNA-binding region, TF-B3.

The protein resides in the nucleus. In Arabidopsis thaliana (Mouse-ear cress), this protein is Putative B3 domain-containing protein At3g28853.